The following is an 85-amino-acid chain: Small ribosomal subunit protein bS20 (85 aa).

It belongs to the bacterial ribosomal protein bS20 family.

Binds directly to 16S ribosomal RNA. The sequence is that of Small ribosomal subunit protein bS20 from Ruminiclostridium cellulolyticum (strain ATCC 35319 / DSM 5812 / JCM 6584 / H10) (Clostridium cellulolyticum).